A 911-amino-acid chain; its full sequence is DNA ligase 4 (911 aa).

ATP-binding residues include Glu271, Thr272, Lys273, Leu274, Arg278, Glu331, Lys345, Phe367, Glu427, Lys432, Lys449, and Lys451. Lys273 functions as the N6-AMP-lysine intermediate in the catalytic mechanism. Position 331 (Glu331) interacts with Mg(2+). Residue Glu427 participates in Mg(2+) binding. A required for catalytic activity region spans residues 610-620; the sequence is LATKHLHVGDD. 2 consecutive BRCT domains span residues 654-743 and 808-911; these read KVSN…PRFM and SPLS…QYLL.

The protein belongs to the ATP-dependent DNA ligase family. Interacts with XRCC4; the LIG4-XRCC4 subcomplex has a 1:2 stoichiometry and XRCC4 is required for LIG4 stability. Component of the core long-range non-homologous end joining (NHEJ) complex (also named DNA-PK complex) composed of PRKDC, LIG4, XRCC4, XRCC6/Ku70, XRCC5/Ku86 and NHEJ1/XLF. Additional component of the NHEJ complex includes PAXX. Following autophosphorylation, PRKDC dissociates from DNA, leading to formation of the short-range NHEJ complex, composed of LIG4, XRCC4, XRCC6/Ku70, XRCC5/Ku86 and NHEJ1/XLF. Interacts with DCLRE1C; the interaction is direct. Interacts with APLF. Mg(2+) is required as a cofactor.

Its subcellular location is the nucleus. It catalyses the reaction ATP + (deoxyribonucleotide)n-3'-hydroxyl + 5'-phospho-(deoxyribonucleotide)m = (deoxyribonucleotide)n+m + AMP + diphosphate.. Its function is as follows. DNA ligase involved in DNA non-homologous end joining (NHEJ); required for double-strand break (DSB) repair and V(D)J recombination. Catalyzes the NHEJ ligation step of the broken DNA during DSB repair by resealing the DNA breaks after the gap filling is completed. Joins single-strand breaks in a double-stranded polydeoxynucleotide in an ATP-dependent reaction. LIG4 is mechanistically flexible: it can ligate nicks as well as compatible DNA overhangs alone, while in the presence of XRCC4, it can ligate ends with 2-nucleotides (nt) microhomology and 1-nt gaps. Forms a subcomplex with XRCC4; the LIG4-XRCC4 subcomplex is responsible for the NHEJ ligation step and XRCC4 enhances the joining activity of LIG4. Binding of the LIG4-XRCC4 complex to DNA ends is dependent on the assembly of the DNA-dependent protein kinase complex DNA-PK to these DNA ends. LIG4 regulates nuclear localization of XRCC4. The sequence is that of DNA ligase 4 from Mus musculus (Mouse).